Here is a 314-residue protein sequence, read N- to C-terminus: MHAYLHCLSHTPLVGFVDPEQAVLDEVNRVIADARRRIAEFDPELVVLFAPDHYNGFFYDVMPPFCLGIGATAIGDFASAAGDLPVPAELAEACAHAILNSGIDLAVSYNMQVDHGFAQPLEFLLGGLDRVPVLPVFINGVAAPLPGFQRTRLLGEAMGRFLNTLNKRVLILGSGGLSHQPPVPELAKADAHLRDRLLGGGKQLPPDERERRQQRVISAARRFTEDPHSLHPLNPVWDNRFMSLLEQGRLSELDAIGNDELSAMAGKSTHEIKTWVAAFAALSAFGRWRSEGRYYRPIPEWIAGFGSLSATTEI.

Histidine 115 (proton donor) is an active-site residue. The active-site Proton acceptor is histidine 179.

Belongs to the LigB/MhpB extradiol dioxygenase family. Homotetramer. Requires Fe(2+) as cofactor.

The enzyme catalyses 3-(2,3-dihydroxyphenyl)propanoate + O2 = (2Z,4E)-2-hydroxy-6-oxonona-2,4-dienedioate + H(+). The catalysed reaction is (2E)-3-(2,3-dihydroxyphenyl)prop-2-enoate + O2 = (2Z,4E,7E)-2-hydroxy-6-oxonona-2,4,7-trienedioate + H(+). It participates in aromatic compound metabolism; 3-phenylpropanoate degradation. Its function is as follows. Catalyzes the non-heme iron(II)-dependent oxidative cleavage of 2,3-dihydroxyphenylpropionic acid and 2,3-dihydroxicinnamic acid into 2-hydroxy-6-ketononadienedioate and 2-hydroxy-6-ketononatrienedioate, respectively. The protein is 2,3-dihydroxyphenylpropionate/2,3-dihydroxicinnamic acid 1,2-dioxygenase of Klebsiella pneumoniae subsp. pneumoniae (strain ATCC 700721 / MGH 78578).